We begin with the raw amino-acid sequence, 270 residues long: 3-methyl-2-oxobutanoate hydroxymethyltransferase (270 aa).

2 residues coordinate Mg(2+): Asp42 and Asp86. Residues 42–43, Asp86, and Lys116 contribute to the 3-methyl-2-oxobutanoate site; that span reads DS. Glu118 lines the Mg(2+) pocket. Glu185 acts as the Proton acceptor in catalysis.

It belongs to the PanB family. Homodecamer; pentamer of dimers. Mg(2+) serves as cofactor.

Its subcellular location is the cytoplasm. The catalysed reaction is 3-methyl-2-oxobutanoate + (6R)-5,10-methylene-5,6,7,8-tetrahydrofolate + H2O = 2-dehydropantoate + (6S)-5,6,7,8-tetrahydrofolate. It participates in cofactor biosynthesis; (R)-pantothenate biosynthesis; (R)-pantoate from 3-methyl-2-oxobutanoate: step 1/2. Functionally, catalyzes the reversible reaction in which hydroxymethyl group from 5,10-methylenetetrahydrofolate is transferred onto alpha-ketoisovalerate to form ketopantoate. The sequence is that of 3-methyl-2-oxobutanoate hydroxymethyltransferase from Synechococcus sp. (strain CC9902).